We begin with the raw amino-acid sequence, 149 residues long: Transcriptional repressor NrdR (149 aa).

The segment at 3-34 is a zinc-finger region; it reads CPFCSHPETQVVETRVAEDGDFVRRRRQCGAC. The 91-residue stretch at 49–139 folds into the ATP-cone domain; that stretch reads PNVVKKDGRR…VYRNFEDIDE (91 aa).

This sequence belongs to the NrdR family. It depends on Zn(2+) as a cofactor.

Functionally, negatively regulates transcription of bacterial ribonucleotide reductase nrd genes and operons by binding to NrdR-boxes. The sequence is that of Transcriptional repressor NrdR from Paracidovorax citrulli (strain AAC00-1) (Acidovorax citrulli).